The chain runs to 507 residues: CWF19-like protein DRN1 (507 aa).

Phosphoserine is present on Ser242.

Belongs to the CWF19 family. As to quaternary structure, interacts with DBR1. Interacts with SYF1, a component of the NTC complex. Interacts with lariat-introns and lariat-intermediates.

The protein localises to the nucleus. The protein resides in the cytoplasm. In terms of biological role, involved in branched RNA metabolism, modulating the turnover of lariat-intron pre-mRNAs by the lariat-debranching enzyme DBR1. Enhances the debranching activity of DBR1 in vitro. The sequence is that of CWF19-like protein DRN1 (DRN1) from Saccharomyces cerevisiae (strain ATCC 204508 / S288c) (Baker's yeast).